We begin with the raw amino-acid sequence, 292 residues long: Ribosomal RNA small subunit methyltransferase A (292 aa).

Residues Asn28, Leu30, Gly55, Glu76, Asp101, and Asn126 each contribute to the S-adenosyl-L-methionine site.

Belongs to the class I-like SAM-binding methyltransferase superfamily. rRNA adenine N(6)-methyltransferase family. RsmA subfamily.

It localises to the cytoplasm. The catalysed reaction is adenosine(1518)/adenosine(1519) in 16S rRNA + 4 S-adenosyl-L-methionine = N(6)-dimethyladenosine(1518)/N(6)-dimethyladenosine(1519) in 16S rRNA + 4 S-adenosyl-L-homocysteine + 4 H(+). Specifically dimethylates two adjacent adenosines (A1518 and A1519) in the loop of a conserved hairpin near the 3'-end of 16S rRNA in the 30S particle. May play a critical role in biogenesis of 30S subunits. The sequence is that of Ribosomal RNA small subunit methyltransferase A from Bacillus mycoides (strain KBAB4) (Bacillus weihenstephanensis).